The chain runs to 210 residues: Type III pantothenate kinase (210 aa).

5 to 12 (DIGNTYLH) is a binding site for ATP. Substrate is bound by residues Y69 and 73-76 (GVDR). The active-site Proton acceptor is D75. D90 lines the K(+) pocket. S93 is an ATP binding site. T145 contributes to the substrate binding site.

The protein belongs to the type III pantothenate kinase family. As to quaternary structure, homodimer. The cofactor is NH4(+). It depends on K(+) as a cofactor.

The protein resides in the cytoplasm. The enzyme catalyses (R)-pantothenate + ATP = (R)-4'-phosphopantothenate + ADP + H(+). It participates in cofactor biosynthesis; coenzyme A biosynthesis; CoA from (R)-pantothenate: step 1/5. Catalyzes the phosphorylation of pantothenate (Pan), the first step in CoA biosynthesis. The chain is Type III pantothenate kinase from Wolinella succinogenes (strain ATCC 29543 / DSM 1740 / CCUG 13145 / JCM 31913 / LMG 7466 / NCTC 11488 / FDC 602W) (Vibrio succinogenes).